A 235-amino-acid chain; its full sequence is Phosphoribosylaminoimidazole-succinocarboxamide synthase (235 aa).

This sequence belongs to the SAICAR synthetase family.

The enzyme catalyses 5-amino-1-(5-phospho-D-ribosyl)imidazole-4-carboxylate + L-aspartate + ATP = (2S)-2-[5-amino-1-(5-phospho-beta-D-ribosyl)imidazole-4-carboxamido]succinate + ADP + phosphate + 2 H(+). It functions in the pathway purine metabolism; IMP biosynthesis via de novo pathway; 5-amino-1-(5-phospho-D-ribosyl)imidazole-4-carboxamide from 5-amino-1-(5-phospho-D-ribosyl)imidazole-4-carboxylate: step 1/2. The protein is Phosphoribosylaminoimidazole-succinocarboxamide synthase of Streptococcus pneumoniae (strain 70585).